Reading from the N-terminus, the 114-residue chain is T cell receptor beta variable 10-2 (114 aa).

Positions 1–21 are cleaved as a signal peptide; that stretch reads MGTRLFFYVALCLLWAGHRDA. An Ig-like domain is found at 22–114; it reads GITQSPRYKI…TSVYFCASSE (93 aa). Cysteines 42 and 110 form a disulfide.

In terms of assembly, alpha-beta TR is a heterodimer composed of an alpha and beta chain; disulfide-linked. The alpha-beta TR is associated with the transmembrane signaling CD3 coreceptor proteins to form the TR-CD3 (TcR or TCR). The assembly of alpha-beta TR heterodimers with CD3 occurs in the endoplasmic reticulum where a single alpha-beta TR heterodimer associates with one CD3D-CD3E heterodimer, one CD3G-CD3E heterodimer and one CD247 homodimer forming a stable octameric structure. CD3D-CD3E and CD3G-CD3E heterodimers preferentially associate with TR alpha and TR beta chains, respectively. The association of the CD247 homodimer is the last step of TcR assembly in the endoplasmic reticulum and is required for transport to the cell surface.

The protein localises to the cell membrane. V region of the variable domain of T cell receptor (TR) beta chain that participates in the antigen recognition. Alpha-beta T cell receptors are antigen specific receptors which are essential to the immune response and are present on the cell surface of T lymphocytes. Recognize peptide-major histocompatibility (MH) (pMH) complexes that are displayed by antigen presenting cells (APC), a prerequisite for efficient T cell adaptive immunity against pathogens. Binding of alpha-beta TR to pMH complex initiates TR-CD3 clustering on the cell surface and intracellular activation of LCK that phosphorylates the ITAM motifs of CD3G, CD3D, CD3E and CD247 enabling the recruitment of ZAP70. In turn ZAP70 phosphorylates LAT, which recruits numerous signaling molecules to form the LAT signalosome. The LAT signalosome propagates signal branching to three major signaling pathways, the calcium, the mitogen-activated protein kinase (MAPK) kinase and the nuclear factor NF-kappa-B (NF-kB) pathways, leading to the mobilization of transcription factors that are critical for gene expression and essential for T cell growth and differentiation. The T cell repertoire is generated in the thymus, by V-(D)-J rearrangement. This repertoire is then shaped by intrathymic selection events to generate a peripheral T cell pool of self-MH restricted, non-autoaggressive T cells. Post-thymic interaction of alpha-beta TR with the pMH complexes shapes TR structural and functional avidity. The polypeptide is T cell receptor beta variable 10-2 (Homo sapiens (Human)).